Consider the following 424-residue polypeptide: Hemagglutinin-esterase (424 aa).

Residues Met-1–Ser-16 form the signal peptide. An esterase domain 1 region spans residues Phe-7–Gly-127. Residues Leu-17–Ile-392 lie on the Virion surface side of the membrane. Ser-40 functions as the Nucleophile in the catalytic mechanism. Cys-44 and Cys-65 form a disulfide bridge. 5 N-linked (GlcNAc...) asparagine; by host glycosylation sites follow: Asn-54, Asn-89, Asn-153, Asn-236, and Asn-301. Intrachain disulfides connect Cys-113–Cys-162, Cys-197–Cys-276, and Cys-205–Cys-249. The receptor binding stretch occupies residues Leu-128–Leu-266. Positions Leu-267–Thr-379 are esterase domain 2. Cys-307 and Cys-312 form a disulfide bridge. Residue Asn-316 is glycosylated (N-linked (GlcNAc...) asparagine; by host). Catalysis depends on charge relay system residues Asp-326 and His-329. An intrachain disulfide couples Cys-347 to Cys-371. N-linked (GlcNAc...) asparagine; by host glycosylation occurs at Asn-358. The chain crosses the membrane as a helical span at residues Ile-393 to Phe-413. Residues Met-414–Ala-424 lie on the Intravirion side of the membrane. The N-linked (GlcNAc...) asparagine; by host glycan is linked to Asn-417.

Belongs to the influenza type C/coronaviruses hemagglutinin-esterase family. In terms of assembly, homodimer; disulfide-linked. Forms a complex with the M protein in the pre-Golgi. Associates then with S-M complex to form a ternary complex S-M-HE. Post-translationally, N-glycosylated in the host RER.

It localises to the virion membrane. The protein resides in the host cell membrane. The enzyme catalyses N-acetyl-9-O-acetylneuraminate + H2O = N-acetylneuraminate + acetate + H(+). It carries out the reaction N-acetyl-4-O-acetylneuraminate + H2O = N-acetylneuraminate + acetate + H(+). Functionally, structural protein that makes short spikes at the surface of the virus. Contains receptor binding and receptor-destroying activities. Mediates de-O-acetylation of N-acetyl-4-O-acetylneuraminic acid, which is probably the receptor determinant recognized by the virus on the surface of erythrocytes and susceptible cells. This receptor-destroying activity is important for virus release as it probably helps preventing self-aggregation and ensures the efficient spread of the progeny virus from cell to cell. May serve as a secondary viral attachment protein for initiating infection, the spike protein being the major one. May become a target for both the humoral and the cellular branches of the immune system. The protein is Hemagglutinin-esterase of Bovine coronavirus (strain 98TXSF-110-LUN) (BCoV-LUN).